The following is a 227-amino-acid chain: Ribosomal RNA large subunit methyltransferase E (227 aa).

The S-adenosyl-L-methionine site is built by glycine 78, tryptophan 80, aspartate 103, aspartate 119, and aspartate 143. Lysine 183 functions as the Proton acceptor in the catalytic mechanism.

The protein belongs to the class I-like SAM-binding methyltransferase superfamily. RNA methyltransferase RlmE family.

It is found in the cytoplasm. It catalyses the reaction uridine(2552) in 23S rRNA + S-adenosyl-L-methionine = 2'-O-methyluridine(2552) in 23S rRNA + S-adenosyl-L-homocysteine + H(+). Specifically methylates the uridine in position 2552 of 23S rRNA at the 2'-O position of the ribose in the fully assembled 50S ribosomal subunit. The chain is Ribosomal RNA large subunit methyltransferase E from Rickettsia felis (strain ATCC VR-1525 / URRWXCal2) (Rickettsia azadi).